Consider the following 75-residue polypeptide: Putative membrane protein insertion efficiency factor (75 aa).

It belongs to the UPF0161 family.

Its subcellular location is the cell membrane. Functionally, could be involved in insertion of integral membrane proteins into the membrane. The chain is Putative membrane protein insertion efficiency factor from Halalkalibacterium halodurans (strain ATCC BAA-125 / DSM 18197 / FERM 7344 / JCM 9153 / C-125) (Bacillus halodurans).